The following is an 89-amino-acid chain: MAHKKAGGSSRNGRDSAGRRLGVKKYGGEAVIPGNIIVRQRGTKFWPAAGVGMGKDHTIFATVDGAVTFHKGLKNRTFISVLPVAEAAE.

The tract at residues 1-21 (MAHKKAGGSSRNGRDSAGRRL) is disordered.

The protein belongs to the bacterial ribosomal protein bL27 family.

The sequence is that of Large ribosomal subunit protein bL27 from Roseobacter denitrificans (strain ATCC 33942 / OCh 114) (Erythrobacter sp. (strain OCh 114)).